The chain runs to 250 residues: MSDSAVATSASPVIAQAASGEKKVSTKKAAATPKSKKSTAAPPSHPPTQQMVDASIKNLKERGGSSLLAIKKYIGATYKCDAQKLAPFIKKYLKNAVANGKLIQTKGKGASGSFKLSRSAKKDPKPKASAVEKKTKKVNASAARATKKKSSTSTTKKAAGAADKKLSKSAPTKKSVEKKRADKAKAKDAKKTGTIKAKPTTAKAKSSATKPKTPKPKTKSAKPKKVVSATTPKKTAVKKPKAKTASATKK.

Positions M1 to S11 are enriched in polar residues. 2 disordered regions span residues M1–D53 and K101–K250. Low complexity predominate over residues K27–P42. Positions S44–R118 constitute an H15 domain. The segment covering A120–K133 has biased composition (basic and acidic residues). The span at S151–A161 shows a compositional bias: low complexity. Residues K174–K191 are compositionally biased toward basic and acidic residues. The span at T192–P211 shows a compositional bias: low complexity. Basic residues-rich tracts occupy residues K212 to K225 and T235 to K250.

This sequence belongs to the histone H1/H5 family.

Its subcellular location is the nucleus. The protein localises to the chromosome. In terms of biological role, histones H1 are necessary for the condensation of nucleosome chains into higher-order structures. The chain is Histone H1.2 (His1.2) from Drosophila virilis (Fruit fly).